A 421-amino-acid polypeptide reads, in one-letter code: MFADKSLSALNAACQRAQQDLQSHCCSLGEHIVRGGAACDISGLGVQDTDISRCHALQRQRDQVAESILDIKSILQRQEELAALGKRVSKVLHRHARQERDVLRSFVAQYYATYAHVGLPALEPIYARTAELESTLQDLRAKRDQLLETCTFGSILERVGLQAKSAVVQRRIRVLEAKIQKIITLCTPDVIAHPDVERMYHAGELSSALSAAYARLISDRGVYASNLQHSQELMDEQEALDARLRALDCGAKPLKRVAAFTAQVSELDEDINALCARIGAAYASCFFTEEGFAQPPLSQKTRPTVPDELSTLLRTVAEARMRVARAGYQVECAKLRQKLQSEQRVCESFCRSIEEYRRGIKEYEAMIESAQQNVALSKATVARLAQSLEEASERLTLFETSPEPIVLSSEVLSVPQEKASV.

Coiled-coil stretches lie at residues 126-182 and 328-397; these read YART…IQKI and YQVE…RLTL.

This is an uncharacterized protein from Treponema pallidum (strain Nichols).